The chain runs to 315 residues: Glutathione synthetase (315 aa).

The 186-residue stretch at 125-310 (KLFTAWFSDL…ITGMLMDAIE (186 aa)) folds into the ATP-grasp domain. A glycan (N-beta-linked (GlcNAc) arginine) is linked at R256. E281 and N283 together coordinate Mg(2+).

This sequence belongs to the prokaryotic GSH synthase family. It depends on Mg(2+) as a cofactor. The cofactor is Mn(2+). Post-translationally, glycosylation at Arg-256 by NleB enhances the glutathione synthetase activity, leading to an increase in glutathione production. Glycosylation may promote C.rodentium survival in oxidative stress conditions.

It catalyses the reaction gamma-L-glutamyl-L-cysteine + glycine + ATP = glutathione + ADP + phosphate + H(+). It functions in the pathway sulfur metabolism; glutathione biosynthesis; glutathione from L-cysteine and L-glutamate: step 2/2. In Citrobacter rodentium, this protein is Glutathione synthetase.